We begin with the raw amino-acid sequence, 56 residues long: GSICLEPKVVGPCKAGIRRFYFDSETGKCTLFLYGGCKGNGNNFETLHACRAICRA.

Residues 4-54 (CLEPKVVGPCKAGIRRFYFDSETGKCTLFLYGGCKGNGNNFETLHACRAIC) enclose the BPTI/Kunitz inhibitor domain. 3 cysteine pairs are disulfide-bonded: Cys-4–Cys-54, Cys-13–Cys-37, and Cys-29–Cys-50.

This sequence belongs to the venom Kunitz-type family. Sea anemone type 2 potassium channel toxin subfamily. Contains three disulfide bonds.

The protein localises to the secreted. Its subcellular location is the nematocyst. Functionally, serine protease inhibitor. This chain is PI-stichotoxin-Hmg3b, found in Heteractis magnifica (Magnificent sea anemone).